The chain runs to 179 residues: Large ribosomal subunit protein uL5 (179 aa).

This sequence belongs to the universal ribosomal protein uL5 family. In terms of assembly, part of the 50S ribosomal subunit; part of the 5S rRNA/L5/L18/L25 subcomplex. Contacts the 5S rRNA and the P site tRNA. Forms a bridge to the 30S subunit in the 70S ribosome.

In terms of biological role, this is one of the proteins that bind and probably mediate the attachment of the 5S RNA into the large ribosomal subunit, where it forms part of the central protuberance. In the 70S ribosome it contacts protein S13 of the 30S subunit (bridge B1b), connecting the 2 subunits; this bridge is implicated in subunit movement. Contacts the P site tRNA; the 5S rRNA and some of its associated proteins might help stabilize positioning of ribosome-bound tRNAs. In Actinobacillus pleuropneumoniae serotype 5b (strain L20), this protein is Large ribosomal subunit protein uL5.